The chain runs to 188 residues: uncharacterized protein (188 aa).

3 consecutive transmembrane segments (helical) span residues 6–26 (MIVF…SLPL), 43–63 (FAGR…ILFA), and 110–130 (ALFL…MIAA).

The protein resides in the membrane. This is an uncharacterized protein from Schizosaccharomyces pombe (strain 972 / ATCC 24843) (Fission yeast).